Reading from the N-terminus, the 1070-residue chain is [F-actin]-monooxygenase MICAL1 (1070 aa).

Residues 1–489 are monooxygenase domain; that stretch reads MASTISTNPA…RDLYDMEAKE (489 aa). Residues Cys95, 114-116, 121-123, Phe181, Tyr293, and Asp393 each bind FAD; these read EKR and RHN. Thr475 bears the Phosphothreonine mark. A Calponin-homology (CH) domain is found at 508 to 612; that stretch reads VGSQEELLRW…YLSHFHSAFK (105 aa). The segment at 643 to 690 is disordered; the sequence is QRTRTQENGEDAGGKKPRLEVKAETPSTEEPPVPKPDEPMTPPSQQQD. Residues 646 to 665 show a composition bias toward basic and acidic residues; sequence RTQENGEDAGGKKPRLEVKA. Residues 671-684 show a composition bias toward pro residues; sequence EEPPVPKPDEPMTP. The LIM zinc-binding domain occupies 695 to 757; the sequence is DLCALCGQHL…LQHLPQTGHE (63 aa). Cys697, Cys700, His718, Cys721, Cys724, Cys727, Cys747, and His750 together coordinate Zn(2+). Disordered regions lie at residues 754–838 and 865–887; these read TGHE…RSCS and MEMGEEERSSSSEEETEEEEDVP. Basic and acidic residues predominate over residues 755 to 766; the sequence is GHEEDSSDRGPE. The segment covering 770-781 has biased composition (polar residues); sequence LPMSSENNTPSG. 3 positions are modified to phosphoserine: Ser793, Ser875, and Ser876. Residues 876 to 887 show a composition bias toward acidic residues; that stretch reads SEEETEEEEDVP. Residues 904–1070 are important for interaction with RAB8A; the sequence is GTMNNYPTWR…ELASEPGVQG (167 aa). One can recognise a bMERB domain in the interval 921 to 1070; sequence KEEEMKRFCK…ELASEPGVQG (150 aa). The stretch at 928-1030 forms a coiled coil; the sequence is FCKAQAIQRR…EETLKTAADR (103 aa). Ser1060 is modified (phosphoserine).

It belongs to the Mical family. In terms of assembly, interacts with STK38 and STK38L. Associates with the SH3 domain of NEDD9. Interacts with VIM and PLXNA3. Interacts with RAB1B, RAB8A, RAB10, RAB13 and RAB15 (in their GTP-bound forms); binding to RAB1B is of low affinity compared to other Rab proteins; at least in case of RAB8A and RAB10 can bind 2 molecules of the Rab proteins simultaneously. Interacts with GRAF1/ARHGAP26, GRAF2/ARHGAP10, RAB8A, RAB8B and RAB10; may bind simultaneously to GRAFs and Rabs and connects GRAFs to Rabs. Does not interact with RAB1 and RAB11A. FAD is required as a cofactor.

It is found in the cytoplasm. Its subcellular location is the cytoskeleton. The protein localises to the endosome membrane. It localises to the midbody. The enzyme catalyses L-methionyl-[F-actin] + NADPH + O2 + H(+) = L-methionyl-(R)-S-oxide-[F-actin] + NADP(+) + H2O. It catalyses the reaction NADPH + O2 + H(+) = H2O2 + NADP(+). Functionally, monooxygenase that promotes depolymerization of F-actin by mediating oxidation of specific methionine residues on actin to form methionine-sulfoxide, resulting in actin filament disassembly and preventing repolymerization. In the absence of actin, it also functions as a NADPH oxidase producing H(2)O(2). Acts as a cytoskeletal regulator that connects NEDD9 to intermediate filaments. Also acts as a negative regulator of apoptosis via its interaction with STK38 and STK38L; acts by antagonizing STK38 and STK38L activation by MST1/STK4. Involved in regulation of lamina-specific connectivity in the nervous system such as the development of lamina-restricted hippocampal connections. Through redox regulation of the actin cytoskeleton controls the intracellular distribution of secretory vesicles containing L1/neurofascin/NgCAM family proteins in neurons, thereby regulating their cell surface levels. May act as Rab effector protein and play a role in vesicle trafficking. Promotes endosomal tubule extension by associating with RAB8 (RAB8A or RAB8B), RAB10 and GRAF (GRAF1/ARHGAP26 or GRAF2/ARHGAP10) on the endosomal membrane which may connect GRAFs to Rabs, thereby participating in neosynthesized Rab8-Rab10-Rab11-dependent protein export. This Bos taurus (Bovine) protein is [F-actin]-monooxygenase MICAL1 (MICAL1).